A 689-amino-acid chain; its full sequence is Glycine--tRNA ligase beta subunit (689 aa).

This sequence belongs to the class-II aminoacyl-tRNA synthetase family. In terms of assembly, tetramer of two alpha and two beta subunits.

Its subcellular location is the cytoplasm. The catalysed reaction is tRNA(Gly) + glycine + ATP = glycyl-tRNA(Gly) + AMP + diphosphate. The protein is Glycine--tRNA ligase beta subunit of Shewanella sp. (strain W3-18-1).